The following is a 249-amino-acid chain: Uridylate kinase (249 aa).

Residue 16 to 19 (KLSG) participates in ATP binding. Position 57 (G57) interacts with UMP. The ATP site is built by G58 and R62. Residues D77 and 138 to 145 (AGMPYFST) each bind UMP. ATP contacts are provided by N166, Y172, and D175.

It belongs to the UMP kinase family. As to quaternary structure, homohexamer.

The protein resides in the cytoplasm. The catalysed reaction is UMP + ATP = UDP + ADP. It functions in the pathway pyrimidine metabolism; CTP biosynthesis via de novo pathway; UDP from UMP (UMPK route): step 1/1. Inhibited by UTP. Catalyzes the reversible phosphorylation of UMP to UDP. This Bifidobacterium adolescentis (strain ATCC 15703 / DSM 20083 / NCTC 11814 / E194a) protein is Uridylate kinase.